Consider the following 191-residue polypeptide: Peptidyl-tRNA hydrolase (191 aa).

Residue Tyr17 participates in tRNA binding. His22 acts as the Proton acceptor in catalysis. TRNA is bound by residues Tyr68, Asn70, and Asn116.

The protein belongs to the PTH family. As to quaternary structure, monomer.

It localises to the cytoplasm. It catalyses the reaction an N-acyl-L-alpha-aminoacyl-tRNA + H2O = an N-acyl-L-amino acid + a tRNA + H(+). Hydrolyzes ribosome-free peptidyl-tRNAs (with 1 or more amino acids incorporated), which drop off the ribosome during protein synthesis, or as a result of ribosome stalling. Functionally, catalyzes the release of premature peptidyl moieties from peptidyl-tRNA molecules trapped in stalled 50S ribosomal subunits, and thus maintains levels of free tRNAs and 50S ribosomes. The chain is Peptidyl-tRNA hydrolase from Francisella tularensis subsp. holarctica (strain FTNF002-00 / FTA).